We begin with the raw amino-acid sequence, 556 residues long: Arginine--tRNA ligase (556 aa).

The 'HIGH' region signature appears at 132 to 142 (ANPTGDLHLGH).

It belongs to the class-I aminoacyl-tRNA synthetase family. In terms of assembly, monomer.

It is found in the cytoplasm. The catalysed reaction is tRNA(Arg) + L-arginine + ATP = L-arginyl-tRNA(Arg) + AMP + diphosphate. The sequence is that of Arginine--tRNA ligase from Bacillus velezensis (strain DSM 23117 / BGSC 10A6 / LMG 26770 / FZB42) (Bacillus amyloliquefaciens subsp. plantarum).